Reading from the N-terminus, the 284-residue chain is Cuticle collagen dpy-5 (284 aa).

Residues 88–284 (GLPSQGCPAG…PCPERKRRRV (197 aa)) are disordered. Triple-helical region stretches follow at residues 94–126 (CPAG…PGLN) and 143–270 (GPPG…VGAD). Residues 106 to 115 (GEPGGTGPDG) are compositionally biased toward gly residues. Residues 163 to 177 (AGKRGTPGKDGEPGR) show a composition bias toward basic and acidic residues. Low complexity-rich tracts occupy residues 181–193 (IGDQ…DGQP), 224–246 (EPGN…TGQP), and 255–271 (DGTP…GADA).

Belongs to the cuticular collagen family. In terms of assembly, collagen polypeptide chains are complexed within the cuticle by disulfide bonds and other types of covalent cross-links. In terms of processing, may be a substrate of bli-4.

Functionally, nematode cuticles are composed largely of collagen-like proteins. The cuticle functions both as an exoskeleton and as a barrier to protect the worm from its environment. The sequence is that of Cuticle collagen dpy-5 (dpy-5) from Caenorhabditis elegans.